An 84-amino-acid polypeptide reads, in one-letter code: Small ribosomal subunit protein uS17 (84 aa).

This sequence belongs to the universal ribosomal protein uS17 family. In terms of assembly, part of the 30S ribosomal subunit.

One of the primary rRNA binding proteins, it binds specifically to the 5'-end of 16S ribosomal RNA. The protein is Small ribosomal subunit protein uS17 of Vibrio parahaemolyticus serotype O3:K6 (strain RIMD 2210633).